The sequence spans 273 residues: Bis(5'-nucleosyl)-tetraphosphatase, symmetrical (273 aa).

The protein belongs to the Ap4A hydrolase family.

It carries out the reaction P(1),P(4)-bis(5'-adenosyl) tetraphosphate + H2O = 2 ADP + 2 H(+). Hydrolyzes diadenosine 5',5'''-P1,P4-tetraphosphate to yield ADP. The chain is Bis(5'-nucleosyl)-tetraphosphatase, symmetrical from Aeromonas salmonicida (strain A449).